A 249-amino-acid polypeptide reads, in one-letter code: 2,3-bisphosphoglycerate-dependent phosphoglycerate mutase (249 aa).

Residues 8 to 15 (RHGQSVWN), 21 to 22 (TG), arginine 60, 87 to 90 (ERHY), lysine 98, 114 to 115 (RR), and 183 to 184 (GN) contribute to the substrate site. Histidine 9 serves as the catalytic Tele-phosphohistidine intermediate. Residue glutamate 87 is the Proton donor/acceptor of the active site.

It belongs to the phosphoglycerate mutase family. BPG-dependent PGAM subfamily. In terms of assembly, homodimer.

It carries out the reaction (2R)-2-phosphoglycerate = (2R)-3-phosphoglycerate. The protein operates within carbohydrate degradation; glycolysis; pyruvate from D-glyceraldehyde 3-phosphate: step 3/5. Catalyzes the interconversion of 2-phosphoglycerate and 3-phosphoglycerate. The sequence is that of 2,3-bisphosphoglycerate-dependent phosphoglycerate mutase from Solidesulfovibrio magneticus (strain ATCC 700980 / DSM 13731 / RS-1) (Desulfovibrio magneticus).